The following is a 351-amino-acid chain: MKALAKLKKQPGIWMIDDAPIPEYGYNDVLIKIKKTAICGTDLHIYNWDKWSQNTIPVPMITGHEFAGEVVAKGDGVTSVDIGDRVSGEGHLVCGQCRNCRAGKRHLCRKTIGIGVNVQGAFAEYLVMPAVNVFKIPDSISDDIASTFDPMGNAIHTALSFNLTGEDVLITGAGPIGLMAVKIARFCGARRIVITDINEYRLQMARDFGATVALNVAPFKNQDELVKQMRKVMSDIGMTEGFDIGLEMSGINSAISMMLDVMNHGGKLSLLGISAGDISVDWGAILFKGLTLKGIYGREMFETWYLMTSMLQAGMDMNPIITHRLHIDEFQKGFEIMKSGQCGKVILDWSS.

Position 39 (cysteine 39) interacts with Zn(2+). Catalysis depends on charge relay system residues threonine 41 and histidine 44. 6 residues coordinate Zn(2+): histidine 64, glutamate 65, cysteine 94, cysteine 97, cysteine 100, and cysteine 108. NAD(+) contacts are provided by residues isoleucine 176, aspartate 196, arginine 201, 271–273, and 295–296; these read LGI and IY.

This sequence belongs to the zinc-containing alcohol dehydrogenase family. As to quaternary structure, homotetramer. Requires Zn(2+) as cofactor.

It is found in the cytoplasm. It carries out the reaction L-threonine + NAD(+) = (2S)-2-amino-3-oxobutanoate + NADH + H(+). It functions in the pathway amino-acid degradation; L-threonine degradation via oxydo-reductase pathway; glycine from L-threonine: step 1/2. In terms of biological role, catalyzes the NAD(+)-dependent oxidation of L-threonine to 2-amino-3-ketobutyrate. This is L-threonine 3-dehydrogenase from Francisella tularensis subsp. novicida (strain U112).